The sequence spans 130 residues: C-X-C motif chemokine 5 (130 aa).

Residues 1–37 form the signal peptide; that stretch reads MSFQLRSSARIPSRSCSSFTLLAFLLLFTLPQHRAQA. Disulfide bonds link Cys50/Cys76 and Cys52/Cys93.

The protein belongs to the intercrine alpha (chemokine CxC) family. As to quaternary structure, monomer. Homodimer.

The protein resides in the secreted. May participate in the recruitment of inflammatory cells by injured or infected tissue. This chain is C-X-C motif chemokine 5 (Cxcl5), found in Rattus norvegicus (Rat).